The chain runs to 246 residues: tRNA (guanine-N(1)-)-methyltransferase (246 aa).

S-adenosyl-L-methionine-binding positions include glycine 113 and leucine 132 to leucine 137.

Belongs to the RNA methyltransferase TrmD family. Homodimer.

It localises to the cytoplasm. It carries out the reaction guanosine(37) in tRNA + S-adenosyl-L-methionine = N(1)-methylguanosine(37) in tRNA + S-adenosyl-L-homocysteine + H(+). Specifically methylates guanosine-37 in various tRNAs. The protein is tRNA (guanine-N(1)-)-methyltransferase of Lactiplantibacillus plantarum (strain ATCC BAA-793 / NCIMB 8826 / WCFS1) (Lactobacillus plantarum).